We begin with the raw amino-acid sequence, 480 residues long: UDP-glucose 6-dehydrogenase 4 (480 aa).

NAD(+) contacts are provided by residues 8 to 13 (GAGYVG), D33, R38, 86 to 90 (VNTPT), 127 to 128 (ST), and E161. Residues 157–161 (EFLAE), 216–223 (KLAANAFL), and 256–269 (RIGP…VGFG) each bind substrate. C272 serves as the catalytic Nucleophile. Position 272-275 (272-275 (CFQK)) interacts with NAD(+). 334–335 (FK) is a substrate binding site. R342 is a binding site for NAD(+). The residue at position 393 (S393) is a Phosphoserine. R447 serves as a coordination point for substrate.

Belongs to the UDP-glucose/GDP-mannose dehydrogenase family.

The enzyme catalyses UDP-alpha-D-glucose + 2 NAD(+) + H2O = UDP-alpha-D-glucuronate + 2 NADH + 3 H(+). It functions in the pathway nucleotide-sugar biosynthesis; UDP-alpha-D-glucuronate biosynthesis; UDP-alpha-D-glucuronate from UDP-alpha-D-glucose: step 1/1. Involved in the biosynthesis of UDP-glucuronic acid (UDP-GlcA), providing nucleotide sugars for cell-wall polymers. This Oryza sativa subsp. japonica (Rice) protein is UDP-glucose 6-dehydrogenase 4 (UGD4).